The sequence spans 175 residues: Alkyl hydroperoxide reductase AhpD (175 aa).

Cys-131 acts as the Proton donor in catalysis. Cys-131 and Cys-134 are disulfide-bonded. Cys-134 functions as the Cysteine sulfenic acid (-SOH) intermediate in the catalytic mechanism.

It belongs to the AhpD family.

It catalyses the reaction N(6)-[(R)-dihydrolipoyl]-L-lysyl-[lipoyl-carrier protein] + a hydroperoxide = N(6)-[(R)-lipoyl]-L-lysyl-[lipoyl-carrier protein] + an alcohol + H2O. In terms of biological role, antioxidant protein with alkyl hydroperoxidase activity. Required for the reduction of the AhpC active site cysteine residues and for the regeneration of the AhpC enzyme activity. The protein is Alkyl hydroperoxide reductase AhpD of Brucella melitensis biotype 1 (strain ATCC 23456 / CCUG 17765 / NCTC 10094 / 16M).